The sequence spans 595 residues: MFS-type efflux pump MFS2 (595 aa).

N-linked (GlcNAc...) asparagine glycosylation occurs at Asn62. A run of 12 helical transmembrane segments spans residues 69–89 (WSIT…SSAY), 106–126 (VITL…LIWA), 136–156 (LLFF…AGSP), 166–186 (FFAG…IADM), 197–217 (GIFA…GGFL), 225–245 (WVEG…SIFL), 301–321 (PIVL…YMLF), 336–356 (PGIG…AMVI), 381–401 (LPVA…FAWT), 409–429 (IVSI…FLSL), 442–462 (ASVL…FPLF), and 478–498 (IPAF…IYGA).

It belongs to the major facilitator superfamily. DHA1 family. Polyamines/proton antiporter (TC 2.A.1.2.16) subfamily.

It is found in the cell membrane. MFS-type efflux pump involved in the modulation susceptibility to fluconazole and voriconazole, 2 azoles with similar molecular structure. The chain is MFS-type efflux pump MFS2 from Trichophyton rubrum (strain ATCC MYA-4607 / CBS 118892) (Athlete's foot fungus).